The chain runs to 204 residues: Elongation factor Ts (204 aa).

Residues 80–83 (TDFV) are involved in Mg(2+) ion dislocation from EF-Tu.

The protein belongs to the EF-Ts family.

It localises to the cytoplasm. In terms of biological role, associates with the EF-Tu.GDP complex and induces the exchange of GDP to GTP. It remains bound to the aminoacyl-tRNA.EF-Tu.GTP complex up to the GTP hydrolysis stage on the ribosome. The polypeptide is Elongation factor Ts (Thermoanaerobacter sp. (strain X514)).